Consider the following 179-residue polypeptide: Large ribosomal subunit protein uL5 (179 aa).

This sequence belongs to the universal ribosomal protein uL5 family. Part of the 50S ribosomal subunit; part of the 5S rRNA/L5/L18/L25 subcomplex. Contacts the 5S rRNA and the P site tRNA. Forms a bridge to the 30S subunit in the 70S ribosome.

This is one of the proteins that bind and probably mediate the attachment of the 5S RNA into the large ribosomal subunit, where it forms part of the central protuberance. In the 70S ribosome it contacts protein S13 of the 30S subunit (bridge B1b), connecting the 2 subunits; this bridge is implicated in subunit movement. Contacts the P site tRNA; the 5S rRNA and some of its associated proteins might help stabilize positioning of ribosome-bound tRNAs. The polypeptide is Large ribosomal subunit protein uL5 (Dictyoglomus turgidum (strain DSM 6724 / Z-1310)).